We begin with the raw amino-acid sequence, 359 residues long: Outer membrane protein A (359 aa).

An N-terminal signal peptide occupies residues 1–21; that stretch reads MKKTAIALAVALAGFATVAQA. The next 8 membrane-spanning stretches (beta stranded) occupy residues 27–37, 62–73, 77–85, 103–114, 119–127, 154–163, 168–175, and 194–202; these read TWYTGAKLGWS, QLGAGAFLGYQA, LGFELGYDW, QGVQLAAKLSYP, LDIYTRLGG, PLAAVGVEYA, WATRLDYQ, and MLSLGVSYR. 5 repeat units span residues 210 to 211, 212 to 213, 214 to 215, 216 to 217, and 218 to 219. The segment at 210-219 is 5 X 2 AA tandem repeats of A-P; sequence APAPAPAPAP. Residues 221–351 enclose the OmpA-like domain; sequence VETKRFTLKS…RVEIEVKGIK (131 aa). A disulfide bond links cysteine 322 and cysteine 336.

It belongs to the outer membrane OOP (TC 1.B.6) superfamily. OmpA family. As to quaternary structure, monomer and homodimer.

It is found in the cell outer membrane. Functionally, with TolR probably plays a role in maintaining the position of the peptidoglycan cell wall in the periplasm. Acts as a porin with low permeability that allows slow penetration of small solutes; an internal gate slows down solute passage. This is Outer membrane protein A from Serratia marcescens.